Reading from the N-terminus, the 276-residue chain is MTDLYAVFGNPINHSKSPSIHRMFAEQTGQDLHYTKQLVDVDKFAQTADAFFAQGGRGLNITVPFKQEAFRYAHSLTPRAERAGAVNFLVQLSDGSIRGDNTDGIGMVHDMHNLDWNIAGKRVLLLGAGGAVRGVLQPLLEEHPAQVVIANRTLSKAEELAKNFLDLGNVEAKGYDQLNGAHFDIVINGTSASLHGELPPLPDNLLNPGACCYDMMYGAEPTVFLQWAQQQGAAHTADGLGMLVGQAAEAFYLWRQIRPEVVPVLTALRRQLHEKK.

Shikimate contacts are provided by residues 15–17 (SKS) and T62. Residue K66 is the Proton acceptor of the active site. Shikimate contacts are provided by N87 and D103. Residues 127-131 (GAGGA), 151-156 (NRTLSK), and M215 contribute to the NADP(+) site. Position 217 (Y217) interacts with shikimate. Residue G239 participates in NADP(+) binding.

It belongs to the shikimate dehydrogenase family. In terms of assembly, homodimer.

It carries out the reaction shikimate + NADP(+) = 3-dehydroshikimate + NADPH + H(+). It functions in the pathway metabolic intermediate biosynthesis; chorismate biosynthesis; chorismate from D-erythrose 4-phosphate and phosphoenolpyruvate: step 4/7. Functionally, involved in the biosynthesis of the chorismate, which leads to the biosynthesis of aromatic amino acids. Catalyzes the reversible NADPH linked reduction of 3-dehydroshikimate (DHSA) to yield shikimate (SA). In Cellvibrio japonicus (strain Ueda107) (Pseudomonas fluorescens subsp. cellulosa), this protein is Shikimate dehydrogenase (NADP(+)).